Reading from the N-terminus, the 447-residue chain is Asparagine--tRNA ligase (447 aa).

The protein belongs to the class-II aminoacyl-tRNA synthetase family. As to quaternary structure, homodimer.

The protein resides in the cytoplasm. The catalysed reaction is tRNA(Asn) + L-asparagine + ATP = L-asparaginyl-tRNA(Asn) + AMP + diphosphate + H(+). This is Asparagine--tRNA ligase from Streptococcus pneumoniae serotype 4 (strain ATCC BAA-334 / TIGR4).